The following is a 339-amino-acid chain: MMPFCHNIINISCVKNNWSNDVRASLYSLMVLIILTTLVGNLIVIVSISHFKELHTPTNWLIHSMATVDFLPGCLVMPYSMVRSAEHCWYFGEVFCKIHTSTDIMLSSASIFHLSFISIDRYYAVCDPLRYKAKINILVICVMIFISWSVPAVFAFGMIFLELNFKGAEEIYYKHVHCRGGCSVFFSKISGVLTFMTSFYIPGSIMLCVYYRIYLIAKEQARLINDANQKLQIGLEMKNGISQSKERKAVKTLGIVMGVFLICWCPFFICTVMDPFLHYIIPPTLNDVLIWFGYLNSTFNPMVYAFFYPWFRKALKMMLFGKIFQKDSSRCKLFLELSS.

The Extracellular segment spans residues 1 to 25 (MMPFCHNIINISCVKNNWSNDVRAS). Disulfide bonds link cysteine 5/cysteine 178, cysteine 13/cysteine 88, and cysteine 96/cysteine 182. N-linked (GlcNAc...) asparagine glycans are attached at residues asparagine 10 and asparagine 17. The helical transmembrane segment at 26 to 46 (LYSLMVLIILTTLVGNLIVIV) threads the bilayer. The Cytoplasmic portion of the chain corresponds to 47–59 (SISHFKELHTPTN). The chain crosses the membrane as a helical span at residues 60–80 (WLIHSMATVDFLPGCLVMPYS). Topologically, residues 81 to 98 (MVRSAEHCWYFGEVFCKI) are extracellular. Residues 99–119 (HTSTDIMLSSASIFHLSFISI) form a helical membrane-spanning segment. Aspartate 103 is a binding site for 2-phenylethylamine. Over 120–136 (DRYYAVCDPLRYKAKIN) the chain is Cytoplasmic. Residues 137–157 (ILVICVMIFISWSVPAVFAFG) traverse the membrane as a helical segment. The Extracellular portion of the chain corresponds to 158–188 (MIFLELNFKGAEEIYYKHVHCRGGCSVFFSK). Residues 189–209 (ISGVLTFMTSFYIPGSIMLCV) traverse the membrane as a helical segment. Over 210-252 (YYRIYLIAKEQARLINDANQKLQIGLEMKNGISQSKERKAVKT) the chain is Cytoplasmic. The helical transmembrane segment at 253–273 (LGIVMGVFLICWCPFFICTVM) threads the bilayer. At 274–287 (DPFLHYIIPPTLND) the chain is on the extracellular side. Residues 288 to 308 (VLIWFGYLNSTFNPMVYAFFY) traverse the membrane as a helical segment. Residues 309-339 (PWFRKALKMMLFGKIFQKDSSRCKLFLELSS) are Cytoplasmic-facing.

The protein belongs to the G-protein coupled receptor 1 family.

The protein localises to the endomembrane system. Its subcellular location is the endoplasmic reticulum membrane. The protein resides in the cell membrane. Its function is as follows. Intracellular G-protein coupled receptor for trace amines, which recognizes endogenous amine-containing metabolites such as beta-phenylethylamine (beta-PEA), 3-iodothyronamine (T1AM), isoamylamine (IAA), cadaverine (CAD), cyclohexylamine (CHA), p-tyramine (p-TYR), trimethylamine (TMA), octopamine and tryptamine. Also functions as a receptor for various drugs and psychoactive substances, such as amphetamine and methamphetamine. Unresponsive to classical biogenic amines, such as epinephrine and histamine and only partially activated by dopamine and serotonin. Expressed in both the central and peripheral nervous system: TAAR1 activation regulates the activity of several neurotransmitter signaling pathways by (1) decreasing the basal firing rates of the neurons involved and by (2) lowering the sensitivity of receptors to neurotransmitters. Ligand binding causes a conformation change that triggers signaling via guanine nucleotide-binding proteins (G proteins) and modulates the activity of downstream effectors. TAAR1 is coupled with different G(i)/G(o)-, G(s)- or G(q)/G(11) classes of G alpha proteins depending on the ligand. CAD-binding is coupled to G(i)/G(o) G alpha proteins and mediates inhibition of adenylate cyclase activity. T1AM- or beta-PEA-binding is coupled to G(s) G alpha proteins and mediates activation of adenylate cyclase activity. CHA- or IAA-binding is coupled to G(q)/G(11) G alpha proteins and activates phospholipase C-beta, releasing diacylglycerol (DAG) and inositol 1,4,5-trisphosphate (IP3) second messengers. TMA-binding is coupled with all three G(i)/G(o)-, G(s)- or G(q)/G(11) G alpha protein subtypes. The sequence is that of Trace amine-associated receptor 1 (TAAR1) from Pan troglodytes (Chimpanzee).